The following is a 253-amino-acid chain: 23S rRNA (cytidine-2'-O)-methyltransferase TlyA (253 aa).

The S4 RNA-binding domain maps to methionine 1 to tyrosine 73.

The protein belongs to the TlyA family.

The catalysed reaction is cytidine(1920) in 23S rRNA + S-adenosyl-L-methionine = 2'-O-methylcytidine(1920) in 23S rRNA + S-adenosyl-L-homocysteine + H(+). Functionally, catalyzes the 2'-O-methylation at nucleotide C1920 in 23S rRNA. Enhances motility. Enhances biofilm formation. Involved in the assembly of 70S ribosomes. Involved in virulence by promoting adherence and invasion to host cells. Involved in pathogenicity by modulating secretion of host-protective chemokine interleukin 8 (IL-8). Involved in susceptibility to antibiotic capreomycin. This is 23S rRNA (cytidine-2'-O)-methyltransferase TlyA from Campylobacter jejuni subsp. jejuni serotype O:23/36 (strain 81-176).